The primary structure comprises 590 residues: Aspartate--tRNA ligase (590 aa).

Glu174 is a binding site for L-aspartate. The segment at 198–201 (QLMK) is aspartate. Arg220 contacts L-aspartate. ATP is bound by residues 220–222 (RDE) and Gln229. Residue His443 participates in L-aspartate binding. Glu484 contacts ATP. Residue Arg491 coordinates L-aspartate. 536 to 539 (GLDR) contacts ATP.

The protein belongs to the class-II aminoacyl-tRNA synthetase family. Type 1 subfamily. As to quaternary structure, homodimer.

It is found in the cytoplasm. The catalysed reaction is tRNA(Asp) + L-aspartate + ATP = L-aspartyl-tRNA(Asp) + AMP + diphosphate. Functionally, catalyzes the attachment of L-aspartate to tRNA(Asp) in a two-step reaction: L-aspartate is first activated by ATP to form Asp-AMP and then transferred to the acceptor end of tRNA(Asp). The sequence is that of Aspartate--tRNA ligase from Lactococcus lactis subsp. lactis (strain IL1403) (Streptococcus lactis).